The sequence spans 332 residues: Beta-ketoacyl-[acyl-carrier-protein] synthase III 2 (332 aa).

Catalysis depends on residues C115 and H252. The tract at residues 253-257 (SANLR) is ACP-binding. The active site involves N282.

The protein belongs to the thiolase-like superfamily. FabH family. As to quaternary structure, homodimer.

It localises to the cytoplasm. It carries out the reaction malonyl-[ACP] + acetyl-CoA + H(+) = 3-oxobutanoyl-[ACP] + CO2 + CoA. It participates in lipid metabolism; fatty acid biosynthesis. Its function is as follows. Catalyzes the condensation reaction of fatty acid synthesis by the addition to an acyl acceptor of two carbons from malonyl-ACP. Catalyzes the first condensation reaction which initiates fatty acid synthesis and may therefore play a role in governing the total rate of fatty acid production. Possesses both acetoacetyl-ACP synthase and acetyl transacylase activities. Its substrate specificity determines the biosynthesis of branched-chain and/or straight-chain of fatty acids. This chain is Beta-ketoacyl-[acyl-carrier-protein] synthase III 2, found in Halalkalibacterium halodurans (strain ATCC BAA-125 / DSM 18197 / FERM 7344 / JCM 9153 / C-125) (Bacillus halodurans).